Here is a 368-residue protein sequence, read N- to C-terminus: 3-dehydroquinate synthase (368 aa).

NAD(+)-binding positions include 69-74 (DGEAYK), 103-107 (GVIGD), 127-128 (TT), Lys140, and Lys149. 3 residues coordinate Zn(2+): Glu182, His245, and His262.

It belongs to the sugar phosphate cyclases superfamily. Dehydroquinate synthase family. The cofactor is Co(2+). Zn(2+) serves as cofactor. NAD(+) is required as a cofactor.

It localises to the cytoplasm. The catalysed reaction is 7-phospho-2-dehydro-3-deoxy-D-arabino-heptonate = 3-dehydroquinate + phosphate. It participates in metabolic intermediate biosynthesis; chorismate biosynthesis; chorismate from D-erythrose 4-phosphate and phosphoenolpyruvate: step 2/7. Functionally, catalyzes the conversion of 3-deoxy-D-arabino-heptulosonate 7-phosphate (DAHP) to dehydroquinate (DHQ). The polypeptide is 3-dehydroquinate synthase (Pseudomonas aeruginosa (strain LESB58)).